Here is a 175-residue protein sequence, read N- to C-terminus: Catabolic 3-dehydroquinase (175 aa).

Tyr23 serves as the catalytic Proton acceptor. Residues Asn74, His80, and Asp87 each contribute to the substrate site. His100 acts as the Proton donor in catalysis. Substrate-binding positions include 101–102 (IS) and Arg111.

This sequence belongs to the type-II 3-dehydroquinase family. In terms of assembly, homododecamer. Adopts a ring-like structure, composed of an arrangement of two hexameric rings stacked on top of one another.

The enzyme catalyses 3-dehydroquinate = 3-dehydroshikimate + H2O. Its pathway is aromatic compound metabolism; 3,4-dihydroxybenzoate biosynthesis; 3,4-dihydroxybenzoate from 3-dehydroquinate: step 1/2. Functionally, is involved in the catabolism of quinate. Allows the utilization of quinate as carbon source via the beta-ketoadipate pathway. The sequence is that of Catabolic 3-dehydroquinase from Talaromyces marneffei (strain ATCC 18224 / CBS 334.59 / QM 7333) (Penicillium marneffei).